A 644-amino-acid chain; its full sequence is Exoribonuclease 2 (644 aa).

Residues 189–516 enclose the RNB domain; sequence REDLTALDFV…NHRLLKAVIK (328 aa). An S1 motif domain is found at 561 to 643; the sequence is DTRFAAEIVD…ETRSIIARPV (83 aa).

The protein belongs to the RNR ribonuclease family. RNase II subfamily.

It localises to the cytoplasm. It carries out the reaction Exonucleolytic cleavage in the 3'- to 5'-direction to yield nucleoside 5'-phosphates.. Involved in mRNA degradation. Hydrolyzes single-stranded polyribonucleotides processively in the 3' to 5' direction. The sequence is that of Exoribonuclease 2 from Escherichia coli O139:H28 (strain E24377A / ETEC).